A 158-amino-acid chain; its full sequence is NADH-quinone oxidoreductase subunit B (158 aa).

The [4Fe-4S] cluster site is built by Cys-37, Cys-38, Cys-102, and Cys-132.

This sequence belongs to the complex I 20 kDa subunit family. NDH-1 is composed of 14 different subunits. Subunits NuoB, C, D, E, F, and G constitute the peripheral sector of the complex. [4Fe-4S] cluster serves as cofactor.

Its subcellular location is the cell inner membrane. It carries out the reaction a quinone + NADH + 5 H(+)(in) = a quinol + NAD(+) + 4 H(+)(out). Its function is as follows. NDH-1 shuttles electrons from NADH, via FMN and iron-sulfur (Fe-S) centers, to quinones in the respiratory chain. Couples the redox reaction to proton translocation (for every two electrons transferred, four hydrogen ions are translocated across the cytoplasmic membrane), and thus conserves the redox energy in a proton gradient. The polypeptide is NADH-quinone oxidoreductase subunit B (Hydrogenovibrio crunogenus (strain DSM 25203 / XCL-2) (Thiomicrospira crunogena)).